The sequence spans 469 residues: Uronate isomerase (469 aa).

The protein belongs to the metallo-dependent hydrolases superfamily. Uronate isomerase family.

It catalyses the reaction D-glucuronate = D-fructuronate. It carries out the reaction aldehydo-D-galacturonate = keto-D-tagaturonate. The protein operates within carbohydrate metabolism; pentose and glucuronate interconversion. In Yersinia pseudotuberculosis serotype O:1b (strain IP 31758), this protein is Uronate isomerase.